A 281-amino-acid polypeptide reads, in one-letter code: Pantothenate synthetase (281 aa).

30 to 37 (MGNLHQGH) contacts ATP. His37 functions as the Proton donor in the catalytic mechanism. Gln61 provides a ligand contact to (R)-pantoate. Gln61 contacts beta-alanine. Residue 149 to 152 (GNKD) participates in ATP binding. Gln155 provides a ligand contact to (R)-pantoate. ATP-binding positions include Ile178 and 186–189 (MSSR).

Belongs to the pantothenate synthetase family. As to quaternary structure, homodimer.

Its subcellular location is the cytoplasm. It catalyses the reaction (R)-pantoate + beta-alanine + ATP = (R)-pantothenate + AMP + diphosphate + H(+). Its pathway is cofactor biosynthesis; (R)-pantothenate biosynthesis; (R)-pantothenate from (R)-pantoate and beta-alanine: step 1/1. In terms of biological role, catalyzes the condensation of pantoate with beta-alanine in an ATP-dependent reaction via a pantoyl-adenylate intermediate. The sequence is that of Pantothenate synthetase from Shewanella oneidensis (strain ATCC 700550 / JCM 31522 / CIP 106686 / LMG 19005 / NCIMB 14063 / MR-1).